We begin with the raw amino-acid sequence, 201 residues long: Probable nicotinate-nucleotide adenylyltransferase (201 aa).

Belongs to the NadD family.

It catalyses the reaction nicotinate beta-D-ribonucleotide + ATP + H(+) = deamido-NAD(+) + diphosphate. Its pathway is cofactor biosynthesis; NAD(+) biosynthesis; deamido-NAD(+) from nicotinate D-ribonucleotide: step 1/1. Its function is as follows. Catalyzes the reversible adenylation of nicotinate mononucleotide (NaMN) to nicotinic acid adenine dinucleotide (NaAD). The chain is Probable nicotinate-nucleotide adenylyltransferase from Neisseria meningitidis serogroup C / serotype 2a (strain ATCC 700532 / DSM 15464 / FAM18).